The chain runs to 451 residues: Scaffold protein ILK (451 aa).

An N-acetylmethionine modification is found at Met1. 5 ANK repeats span residues 2–30 (DDIF…LNQG), 31–63 (DDHG…INVM), 64–96 (NRGD…INAV), 97–129 (NEHG…VSIC), and 130–174 (NKYG…GTTR). The tract at residues 33–139 (HGFSPLHWAC…NKYGEMPMDK (107 aa)) is interaction with LIMS1. Thr173 is modified (phosphothreonine). Residues 180–212 (GTLNKHSGIDFKQLNFLAKLNENHSGELWKGRW) form a PH-like; mediates interaction with TGFB1I1 region. Ser186 is modified (phosphoserine). In terms of domain architecture, Protein kinase spans 193–445 (LNFLAKLNEN…PKFDMIVPIL (253 aa)). Asn200, Asn202, His203, and Ser204 together coordinate ATP. Ser246 carries the phosphoserine modification. ATP contacts are provided by His270, Met272, and Asn279. Asp339 lines the Mg(2+) pocket. Lys341 provides a ligand contact to ATP. The Nuclear localization signal signature appears at 363–371 (KKPEDTNRR). Position 425 is an N6-acetyllysine (Lys425).

The protein belongs to the protein kinase superfamily. TKL Ser/Thr protein kinase family. In terms of assembly, component of the heterotrimeric IPP (ILK-PINCH-PARVIN) complex composed of ILK, LIMS1/PINCH and PARVA; the complex binds to F-actin via the C-terminal tail of LIMS1 and the N-terminal region of PARVA, promoting F-actin filament bundling. Formation of the IPP complex is dependent on protein kinase C and precedes integrin-mediated cell adhesion and spreading. ILK also interacts with LIMS2/PINCH2 and with PARVB and PARVG which may substitute for LIMS1 and PARVA in the IPP complex; PARVA and PARVB compete for the same binding site. Interaction with PARVG promotes the establishment of cell polarity required for leukocyte migration. Interacts with the cytoplasmic domain of integrin ITGB1 and may also interact with integrins ITGB2, ITGB3 and/or ITGB5. Interacts probably also with TGFB1I1. Interacts (via ANK repeats) with EPHA1 (via SAM domain); stimulated by EFNA1 but independent of the kinase activity of EPHA1. Interacts with FERMT2. Interacts with LIMD2; leading to activate the protein kinase activity. Interacts with PXN/PAXILLIN (via LD motif 4). Interacts with CCDC25 (via cytoplasmic region); initiating the ILK-PARVB cascade to induce cytoskeleton rearrangement and directional migration of cells. Interacts with IQGAP1; the interaction is required for localization of IQGAP1 to the cell cortex. Phosphorylation by PAK1 modulates ILK subcellular location by promoting its nuclear export.

It is found in the cell junction. Its subcellular location is the focal adhesion. The protein resides in the cell membrane. The protein localises to the cell projection. It localises to the lamellipodium. It is found in the cytoplasm. Its subcellular location is the myofibril. The protein resides in the sarcomere. The protein localises to the nucleus. It localises to the cytoskeleton. It is found in the microtubule organizing center. Its subcellular location is the centrosome. The protein resides in the cell cortex. Its function is as follows. Scaffold protein which mediates protein-protein interactions during a range of cellular events including focal adhesion assembly, cell adhesion and cell migration. Regulates integrin-mediated signal transduction by contributing to inside-out integrin activation. Recruits PARVA and LIMS1/PITCH to form the heterotrimeric IPP (ILK-PINCH-PARVIN) complex which binds to F-actin via the C-terminal tail of LIMS1 and the N-terminal region of PARVA, promoting F-actin filament bundling, a process required to generate force for actin cytoskeleton reorganization and subsequent dynamic cell adhesion events such as cell spreading and migration. Binding to PARVA promotes effective assembly of ILK into focal adhesions while PARVA-bound ILK can simultaneously engage integrin-beta cytoplasmic tails to mediate cell adhesion. Plays a role with PARVG in promoting the cell adhesion and spreading of leukocytes. Acts as an upstream effector of both AKT1/PKB and GSK3. Mediates trafficking of caveolae to the cell surface in an ITGB1-dependent manner by promoting the recruitment of IQGAP1 to the cell cortex which cooperates with its effector DIAPH1 to locally stabilize microtubules and allow stable insertion of caveolae into the plasma membrane. Required for the maintenance of mitotic spindle integrity by promoting phosphorylation of TACC3 by AURKA. Associates with chromatin and may act as a negative regulator of transcription when located in the nucleus. This is Scaffold protein ILK from Cavia porcellus (Guinea pig).